Consider the following 412-residue polypeptide: Serine hydroxymethyltransferase (412 aa).

Residues Leu-117 and 121–123 (GHL) contribute to the (6S)-5,6,7,8-tetrahydrofolate site. Lys-226 bears the N6-(pyridoxal phosphate)lysine mark.

Belongs to the SHMT family. As to quaternary structure, homodimer. It depends on pyridoxal 5'-phosphate as a cofactor.

The protein resides in the cytoplasm. The catalysed reaction is (6R)-5,10-methylene-5,6,7,8-tetrahydrofolate + glycine + H2O = (6S)-5,6,7,8-tetrahydrofolate + L-serine. The protein operates within one-carbon metabolism; tetrahydrofolate interconversion. It functions in the pathway amino-acid biosynthesis; glycine biosynthesis; glycine from L-serine: step 1/1. Catalyzes the reversible interconversion of serine and glycine with tetrahydrofolate (THF) serving as the one-carbon carrier. This reaction serves as the major source of one-carbon groups required for the biosynthesis of purines, thymidylate, methionine, and other important biomolecules. Also exhibits THF-independent aldolase activity toward beta-hydroxyamino acids, producing glycine and aldehydes, via a retro-aldol mechanism. This Staphylococcus haemolyticus (strain JCSC1435) protein is Serine hydroxymethyltransferase.